The primary structure comprises 472 residues: Glutamate--tRNA ligase (472 aa).

The short motif at 10-20 (PSPTGYLHVGG) is the 'HIGH' region element. Zn(2+)-binding residues include C99, C101, C126, and D128. Residues 238-242 (KLSKR) carry the 'KMSKS' region motif. K241 serves as a coordination point for ATP.

Belongs to the class-I aminoacyl-tRNA synthetase family. Glutamate--tRNA ligase type 1 subfamily. In terms of assembly, monomer. It depends on Zn(2+) as a cofactor.

Its subcellular location is the cytoplasm. The catalysed reaction is tRNA(Glu) + L-glutamate + ATP = L-glutamyl-tRNA(Glu) + AMP + diphosphate. In terms of biological role, catalyzes the attachment of glutamate to tRNA(Glu) in a two-step reaction: glutamate is first activated by ATP to form Glu-AMP and then transferred to the acceptor end of tRNA(Glu). This Photorhabdus laumondii subsp. laumondii (strain DSM 15139 / CIP 105565 / TT01) (Photorhabdus luminescens subsp. laumondii) protein is Glutamate--tRNA ligase.